Consider the following 701-residue polypeptide: Phytyl ester synthase 2, chloroplastic (701 aa).

The N-terminal 65 residues, 1-65 (MAVTVLPSVS…KNNDENRATV (65 aa)), are a transit peptide targeting the chloroplast. The tract at residues 37–64 (SVTSTSSPPTPSSGVQRRRKNNDENRAT) is disordered.

This sequence belongs to the diacylglycerol acyltransferase family.

It is found in the plastid. The protein localises to the chloroplast. Its subcellular location is the plastoglobule. It carries out the reaction a 1,2-diacyl-3-O-(beta-D-galactosyl)-sn-glycerol + a 1,2-diacylglycerol = an acyl-3-O-(beta-D-galactosyl)-sn-glycerol + a triacylglycerol. It catalyses the reaction a 1,2-diacylglycerol + a fatty acyl-CoA = a triacylglycerol + CoA. The catalysed reaction is a fatty acyl-[ACP] + a 1,2-diacylglycerol = a triacylglycerol + holo-[ACP]. The enzyme catalyses phytol + a fatty acyl-CoA = a fatty acid phytyl ester + CoA. It carries out the reaction phytol + tetradecanoyl-CoA = tetradecanoate phytyl ester + CoA. It catalyses the reaction a 1,3-diacylglycerol + a fatty acyl-CoA = a triacylglycerol + CoA. The catalysed reaction is 1,2-dihexanoylglycerol + tetradecanoyl-CoA = 1,2-dihexanoyl-3-tetradecanoylglycerol + CoA. The enzyme catalyses 1,2-dihexanoylglycerol + hexadecanoyl-CoA = 1,2-dihexanoyl-3-hexadecanoylglycerol + CoA. It carries out the reaction 1,2-dihexanoylglycerol + octadecanoyl-CoA = 1,2-dihexanoyl-3-octadecanoylglycerol + CoA. It catalyses the reaction (7Z,10Z,13Z)-hexadecatrienoyl-CoA + 1,2-dihexanoylglycerol = 1,2-dihexanoyl-3-(7Z,10Z,13Z-hexadecatrienoyl)-glycerol + CoA. The catalysed reaction is 1,2-dihexanoylglycerol + (9Z)-octadecenoyl-CoA = 1,2-dihexanoyl-3-(9Z-octadecenoyl)-glycerol + CoA. The enzyme catalyses 1,2-dihexanoylglycerol + (9Z,12Z,15Z)-octadecatrienoyl-CoA = 1,2-dihexanoyl-3-(9Z,12Z,15Z-octadecatrienoyl)-glycerol + CoA. It carries out the reaction phytol + decanoyl-CoA = decanoate phytyl ester + CoA. It catalyses the reaction (7Z,10Z,13Z)-hexadecatrienoyl-CoA + phytol = (7Z,10Z,13Z)-hexadecatrienoate phytyl ester + CoA. The catalysed reaction is phytol + dodecanoyl-CoA = dodecanoate phytyl ester + CoA. In terms of biological role, acyltransferase involved in fatty acid phytyl ester synthesis in chloroplasts, a process required for the maintenance of the photosynthetic membrane integrity during abiotic stress and senescence. Exhibits phytyl ester synthesis and diacylglycerol acyltransferase activities with broad substrate specificities, and can employ acyl-CoAs, acyl carrier proteins, and galactolipids as acyl donors. This chain is Phytyl ester synthase 2, chloroplastic, found in Arabidopsis thaliana (Mouse-ear cress).